Reading from the N-terminus, the 542-residue chain is CTP synthase (542 aa).

An amidoligase domain region spans residues 1–265 (MTRYVFITGG…DREILAHFQM (265 aa)). Residue serine 13 participates in CTP binding. Serine 13 serves as a coordination point for UTP. ATP is bound by residues 14–19 (SLGKGL) and aspartate 71. Positions 71 and 139 each coordinate Mg(2+). CTP-binding positions include 146 to 148 (DIE), 186 to 191 (KTKPTQ), and lysine 222. UTP-binding positions include 186-191 (KTKPTQ) and lysine 222. 238–240 (RDV) is an ATP binding site. Residues 291–541 (TIAIVGKYTG…IAAAIDQSRL (251 aa)) enclose the Glutamine amidotransferase type-1 domain. L-glutamine is bound at residue glycine 353. Cysteine 380 functions as the Nucleophile; for glutamine hydrolysis in the catalytic mechanism. L-glutamine is bound by residues 381–384 (FGMQ), glutamate 404, and arginine 469. Catalysis depends on residues histidine 514 and glutamate 516.

Belongs to the CTP synthase family. As to quaternary structure, homotetramer.

It catalyses the reaction UTP + L-glutamine + ATP + H2O = CTP + L-glutamate + ADP + phosphate + 2 H(+). It carries out the reaction L-glutamine + H2O = L-glutamate + NH4(+). The catalysed reaction is UTP + NH4(+) + ATP = CTP + ADP + phosphate + 2 H(+). Its pathway is pyrimidine metabolism; CTP biosynthesis via de novo pathway; CTP from UDP: step 2/2. Its activity is regulated as follows. Allosterically activated by GTP, when glutamine is the substrate; GTP has no effect on the reaction when ammonia is the substrate. The allosteric effector GTP functions by stabilizing the protein conformation that binds the tetrahedral intermediate(s) formed during glutamine hydrolysis. Inhibited by the product CTP, via allosteric rather than competitive inhibition. Its function is as follows. Catalyzes the ATP-dependent amination of UTP to CTP with either L-glutamine or ammonia as the source of nitrogen. Regulates intracellular CTP levels through interactions with the four ribonucleotide triphosphates. The sequence is that of CTP synthase from Methylorubrum extorquens (strain CM4 / NCIMB 13688) (Methylobacterium extorquens).